The primary structure comprises 358 residues: Programmed cell death protein 2-like (358 aa).

An N-acetylalanine modification is found at Ala2. Ser20 is subject to Phosphoserine. At Thr22 the chain carries Phosphothreonine.

In terms of tissue distribution, higher expression in lung, colon, mammary gland, cervix, stomach and small intestine.

Its function is as follows. Over-expression suppresses AP1, CREB, NFAT, and NF-kB transcriptional activation, and delays cell cycle progression at S phase. This chain is Programmed cell death protein 2-like (PDCD2L), found in Homo sapiens (Human).